Reading from the N-terminus, the 232-residue chain is Phosphatidylserine decarboxylase proenzyme (232 aa).

Ser-190 functions as the Schiff-base intermediate with substrate; via pyruvic acid in the catalytic mechanism. Ser-190 bears the Pyruvic acid (Ser); by autocatalysis mark.

The protein belongs to the phosphatidylserine decarboxylase family. PSD-A subfamily. Heterodimer of a large membrane-associated beta subunit and a small pyruvoyl-containing alpha subunit. Pyruvate is required as a cofactor. In terms of processing, is synthesized initially as an inactive proenzyme. Formation of the active enzyme involves a self-maturation process in which the active site pyruvoyl group is generated from an internal serine residue via an autocatalytic post-translational modification. Two non-identical subunits are generated from the proenzyme in this reaction, and the pyruvate is formed at the N-terminus of the alpha chain, which is derived from the carboxyl end of the proenzyme. The post-translation cleavage follows an unusual pathway, termed non-hydrolytic serinolysis, in which the side chain hydroxyl group of the serine supplies its oxygen atom to form the C-terminus of the beta chain, while the remainder of the serine residue undergoes an oxidative deamination to produce ammonia and the pyruvoyl prosthetic group on the alpha chain.

Its subcellular location is the cell membrane. It carries out the reaction a 1,2-diacyl-sn-glycero-3-phospho-L-serine + H(+) = a 1,2-diacyl-sn-glycero-3-phosphoethanolamine + CO2. It participates in phospholipid metabolism; phosphatidylethanolamine biosynthesis; phosphatidylethanolamine from CDP-diacylglycerol: step 2/2. Catalyzes the formation of phosphatidylethanolamine (PtdEtn) from phosphatidylserine (PtdSer). This chain is Phosphatidylserine decarboxylase proenzyme, found in Bradyrhizobium sp. (strain ORS 278).